The sequence spans 278 residues: Undecaprenyl-diphosphatase (278 aa).

8 consecutive transmembrane segments (helical) span residues 3–23 (YILI…IPIS), 42–62 (VAYS…IIYF), 88–108 (FLVI…LFVI), 112–132 (ILGL…IIIY), 152–172 (IIIV…RSGI), 190–210 (LSFI…VLFS), 225–245 (GLLI…NALL), and 253–273 (VVVL…LSGI).

It belongs to the UppP family.

Its subcellular location is the cell membrane. It carries out the reaction di-trans,octa-cis-undecaprenyl diphosphate + H2O = di-trans,octa-cis-undecaprenyl phosphate + phosphate + H(+). Its function is as follows. Catalyzes the dephosphorylation of undecaprenyl diphosphate (UPP). This Saccharolobus islandicus (strain M.14.25 / Kamchatka #1) (Sulfolobus islandicus) protein is Undecaprenyl-diphosphatase.